The following is a 136-amino-acid chain: Small ribosomal subunit protein uS8c (136 aa).

Belongs to the universal ribosomal protein uS8 family. Part of the 30S ribosomal subunit.

The protein localises to the plastid. The protein resides in the chloroplast. Its function is as follows. One of the primary rRNA binding proteins, it binds directly to 16S rRNA central domain where it helps coordinate assembly of the platform of the 30S subunit. This Oryza sativa subsp. indica (Rice) protein is Small ribosomal subunit protein uS8c (rps8).